Consider the following 276-residue polypeptide: NAD-capped RNA hydrolase NudC (276 aa).

Residue R82 coordinates substrate. Positions 112 and 115 each coordinate Zn(2+). E125 contacts substrate. Residues C130 and C133 each coordinate Zn(2+). Y138 is a substrate binding site. The region spanning 139 to 262 is the Nudix hydrolase domain; it reads PRISPSMIVL…SIARYLIDLY (124 aa). 3 residues coordinate a divalent metal cation: A172, E188, and E192. Positions 173-194 match the Nudix box motif; it reads GFAEPGESAEDCLVREVREEVA. A substrate-binding site is contributed by 206 to 213; it reads QCWPFPHS. A divalent metal cation is bound at residue E233. Residue A255 participates in substrate binding.

It belongs to the Nudix hydrolase family. NudC subfamily. In terms of assembly, homodimer. Mg(2+) serves as cofactor. It depends on Mn(2+) as a cofactor. Zn(2+) is required as a cofactor.

The enzyme catalyses a 5'-end NAD(+)-phospho-ribonucleoside in mRNA + H2O = a 5'-end phospho-adenosine-phospho-ribonucleoside in mRNA + beta-nicotinamide D-ribonucleotide + 2 H(+). It catalyses the reaction NAD(+) + H2O = beta-nicotinamide D-ribonucleotide + AMP + 2 H(+). It carries out the reaction NADH + H2O = reduced beta-nicotinamide D-ribonucleotide + AMP + 2 H(+). Functionally, mRNA decapping enzyme that specifically removes the nicotinamide adenine dinucleotide (NAD) cap from a subset of mRNAs by hydrolyzing the diphosphate linkage to produce nicotinamide mononucleotide (NMN) and 5' monophosphate mRNA. The NAD-cap is present at the 5'-end of some mRNAs and stabilizes RNA against 5'-processing. Has preference for mRNAs with a 5'-end purine. Catalyzes the hydrolysis of a broad range of dinucleotide pyrophosphates. The protein is NAD-capped RNA hydrolase NudC of Pseudomonas putida (strain ATCC 47054 / DSM 6125 / CFBP 8728 / NCIMB 11950 / KT2440).